An 856-amino-acid polypeptide reads, in one-letter code: DNA mismatch repair protein MutS (856 aa).

600–607 (GPNMSGKS) provides a ligand contact to ATP.

It belongs to the DNA mismatch repair MutS family.

Its function is as follows. This protein is involved in the repair of mismatches in DNA. It is possible that it carries out the mismatch recognition step. This protein has a weak ATPase activity. This chain is DNA mismatch repair protein MutS, found in Lactobacillus acidophilus (strain ATCC 700396 / NCK56 / N2 / NCFM).